The primary structure comprises 382 residues: uncharacterized protein (382 aa).

12 consecutive transmembrane segments (helical) span residues 14-34 (GLLLLTLAIAVLNTLVPLWLA), 45-65 (VVSSSYFTGNLVGTLLTGYVI), 79-99 (FIFAAGCAGLGLMIGFWSWLA), 102-122 (FVAGVGCAMIWVVVESALMCS), 131-151 (LLAAYMMVYYVGTFLGQLLVS), 157-177 (LMSVLPWVTGLTLAGILPLLF), 204-224 (LGVNGCIISGIVLGSLYGLMP), 235-255 (ASIGFWMAVLVSAGILGQWPI), 270-290 (VQVFVVILGSIAMLSQAAMAP), 291-311 (ALFILGAAGFTLYPVAMAWAC), 325-345 (ALLLSYTVGSLLGPSFSAMLM), and 348-368 (FSDNLLFIMIASVSFIYLLML).

It belongs to the major facilitator superfamily. YcaD (TC 2.A.1.26) family.

The protein localises to the cell inner membrane. This is an uncharacterized protein from Shigella flexneri serotype 5b (strain 8401).